The following is a 490-amino-acid chain: GTPase Der (490 aa).

2 EngA-type G domains span residues Pro-3–Met-166 and Ile-200–Thr-373. GTP contacts are provided by residues Gly-9–Ser-16, Asp-56–Ile-60, Asn-118–Asp-121, Gly-206–Ser-213, Asp-253–Val-257, and Asn-318–Asp-321. The KH-like domain maps to Arg-374–Gly-458. Residues Thr-470 to Asp-490 form a disordered region.

This sequence belongs to the TRAFAC class TrmE-Era-EngA-EngB-Septin-like GTPase superfamily. EngA (Der) GTPase family. As to quaternary structure, associates with the 50S ribosomal subunit.

GTPase that plays an essential role in the late steps of ribosome biogenesis. The polypeptide is GTPase Der (Shewanella pealeana (strain ATCC 700345 / ANG-SQ1)).